Consider the following 333-residue polypeptide: MKKTTRKQKRPLLAILILAVILIVLSVISIGIGALYISPDAVVTNLLGLDHSFEFIIQQYRLPRIILAILAGAGLAAAGAILQGVIRNPLASPDVVGISKGSGLAAMAVILIFPESPVYVLPFSAFAGAAIIAVLLLMIARKKSIQPSSLALSGIALGAVCHAGMQYMMVKFPGDVNAALIWLTGSLWGRNWEEVKLLAPWLLILFPIVCILIPKLDLMSLGDELAQGLGENANRLRFILIFTAVALAGSCVAVVGSIGFIGLLAPHIARRLTGEKAKYLLPASALIGAIILLIADTLGRGIMPPVEIPAGILTAVIGAPYFLYLLKFEARKQ.

A run of 8 helical transmembrane segments spans residues 12–32, 65–85, 95–115, 120–140, 194–214, 238–258, 279–299, and 306–326; these read LLAILILAVILIVLSVISIGI, IILAILAGAGLAAAGAILQGV, VVGISKGSGLAAMAVILIFPE, VLPFSAFAGAAIIAVLLLMIA, EVKLLAPWLLILFPIVCILIP, FILIFTAVALAGSCVAVVGSI, YLLPASALIGAIILLIADTLG, and VEIPAGILTAVIGAPYFLYLL.

The protein belongs to the binding-protein-dependent transport system permease family. FecCD subfamily. As to quaternary structure, the complex is composed of one ATP-binding protein (YfmF), two transmembrane proteins (YfmD and YfmE) and a solute-binding protein (YfmC).

The protein resides in the cell membrane. In terms of biological role, part of the ABC transporter complex YfmCDEF involved in citrate-dependent Fe(3+) import. Involved in the translocation of the substrate across the membrane. This chain is Fe(3+)-citrate import system permease protein YfmE (yfmE), found in Bacillus subtilis (strain 168).